A 225-amino-acid polypeptide reads, in one-letter code: Lipoarabinomannan carrier protein LprG (225 aa).

Residues 1 to 21 form the signal peptide; that stretch reads MRNRIRLALIPVAVAAIALAG. Residue cysteine 22 is the site of N-palmitoyl cysteine attachment. Cysteine 22 carries S-diacylglycerol cysteine lipidation.

This sequence belongs to the LppX/LprAFG lipoprotein family. Post-translationally, modified by Lgt on Cys-22 with an S-linked diacylglyceral, signal peptide is removed by LspA, Cys-22 is further modifed with a fatty acid on its amino group by Lnt yielding a triacylated protein.

It is found in the cell inner membrane. Functionally, helps membrane protein MAB_2807 (P55) transport triacylglycerides (TAG) across the inner cell membrane into the periplasm and probably ultimately to the outer membrane. Binds TAG in its hydrophobic cavity and transfers it between lipid bilayers. TAG probably regulates lipid metabolism and growth regulation and plays a structural role in the outer membrane. Also binds mannosides, lipoarabinomannan and lipomannan and various glycolipids in the same cavity. This Mycobacteroides abscessus (strain ATCC 19977 / DSM 44196 / CCUG 20993 / CIP 104536 / JCM 13569 / NCTC 13031 / TMC 1543 / L948) (Mycobacterium abscessus) protein is Lipoarabinomannan carrier protein LprG.